The sequence spans 352 residues: 4-hydroxybenzaldehyde synthase, chloroplastic (352 aa).

N-linked (GlcNAc...) asparagine glycosylation is present at N122. 2 disulfides stabilise this stretch: C159-C199 and C190-C231. An N-linked (GlcNAc...) asparagine glycan is attached at N247. C289 and C339 are disulfide-bonded. Catalysis depends on residues H298 and N318.

It belongs to the peptidase C1 family. In terms of assembly, forms homodimers, homotrimers and homotetramers. In terms of tissue distribution, mainly expressed in pods, but also present in stems, roots, leaves and embryos (at protein level).

It localises to the plastid. The protein localises to the chloroplast. It catalyses the reaction (E)-4-coumarate + H2O = 4-hydroxybenzaldehyde + acetate. It functions in the pathway aromatic compound metabolism; phenylpropanoid biosynthesis. Its activity is regulated as follows. Inhibited by ascorbate. Its function is as follows. Involved in the biosynthesis of vanillin (4-hydroxy-3-methoxy-benzaldehyde) and derivative natural products, key components of vanilla pods flavor. Catalyzes the conversion of (E)-4-coumarate to 4-hydroxybenzaldehyde, a vanillin precursor. Mediates the conversion of ferulic acid to 3-methoxy-4-hydroxybenzaldehyde with a very low efficiency. Cannot use cinnamic, caffeic, sinapic and o-coumaric acids as substrates. The polypeptide is 4-hydroxybenzaldehyde synthase, chloroplastic (Vanilla planifolia (Vanilla)).